The primary structure comprises 478 residues: Protein nucleotidyltransferase YdiU (478 aa).

ATP-binding residues include Gly-84, Gly-86, Arg-87, Lys-107, Asp-119, Gly-120, Arg-170, and Arg-177. The active-site Proton acceptor is the Asp-246. Positions 247 and 256 each coordinate Mg(2+). Asp-256 serves as a coordination point for ATP.

Belongs to the SELO family. Mg(2+) serves as cofactor. Mn(2+) is required as a cofactor.

The catalysed reaction is L-seryl-[protein] + ATP = 3-O-(5'-adenylyl)-L-seryl-[protein] + diphosphate. The enzyme catalyses L-threonyl-[protein] + ATP = 3-O-(5'-adenylyl)-L-threonyl-[protein] + diphosphate. It catalyses the reaction L-tyrosyl-[protein] + ATP = O-(5'-adenylyl)-L-tyrosyl-[protein] + diphosphate. It carries out the reaction L-histidyl-[protein] + UTP = N(tele)-(5'-uridylyl)-L-histidyl-[protein] + diphosphate. The catalysed reaction is L-seryl-[protein] + UTP = O-(5'-uridylyl)-L-seryl-[protein] + diphosphate. The enzyme catalyses L-tyrosyl-[protein] + UTP = O-(5'-uridylyl)-L-tyrosyl-[protein] + diphosphate. In terms of biological role, nucleotidyltransferase involved in the post-translational modification of proteins. It can catalyze the addition of adenosine monophosphate (AMP) or uridine monophosphate (UMP) to a protein, resulting in modifications known as AMPylation and UMPylation. This chain is Protein nucleotidyltransferase YdiU, found in Escherichia coli O81 (strain ED1a).